Consider the following 291-residue polypeptide: Stomatin-like protein 3 (291 aa).

S7 is modified (phosphoserine). Residues 29-49 traverse the membrane as a helical; Signal-anchor for type III membrane protein segment; sequence WILFSLSFLLVIITFPISIWM. The Cytoplasmic portion of the chain corresponds to 50–291; that stretch reads CLKIIKEYER…DNHKKLPNKA (242 aa). S241 carries the phosphoserine modification.

Belongs to the band 7/mec-2 family. In terms of assembly, homodimer. Interacts with PIEZO1 and PIEZO2.

The protein resides in the cell membrane. Its function is as follows. Required for the function of many mechanoreceptors. Modulate mechanotransduction channels and acid-sensing ion channels (ASIC) proteins. Potentiates PIEZO1 and PIEZO2 function by increasing their sensitivity to mechanical stimulations. The protein is Stomatin-like protein 3 (STOML3) of Homo sapiens (Human).